An 887-amino-acid polypeptide reads, in one-letter code: PAN2-PAN3 deadenylation complex subunit Pan3 (887 aa).

A C3H1-type zinc finger spans residues 49–77; that stretch reads GVKLKYCRYYAKDKTCFYGEECQFLHEDP. Disordered stretches follow at residues 111–139, 280–307, and 321–393; these read GGGA…GLDG, ENNL…SNVS, and PSMG…GQVI. The interval 147 to 498 is necessary and sufficient for interaction with PABPC1 but not needed for interaction with PAN2; it reads MDGGALTDAS…PPPNRIQKSS (352 aa). 2 stretches are compositionally biased toward polar residues: residues 281 to 290 and 298 to 307; these read NNLQTPNPTA and GSTSRLSNVS. The PABPC-interacting motif-2 (PAM-2) motif lies at 284-299; it reads QTPNPTASEFIPKGGS. A phosphoserine mark is found at S354 and S361. Residues 463–750 are pseudokinase domain; that stretch reads QIDQADMPAV…SVNDIMPMIG (288 aa). ATP contacts are provided by residues R521, 570–577, and 644–645; these read DFHAGGET and TK. Positions 789-887 are knob domain; that stretch reads TINERPEFQK…ELIAAANGQL (99 aa).

This sequence belongs to the protein kinase superfamily. PAN3 family. Homodimer. Forms a heterotrimer with a catalytic subunit PAN2 to form the poly(A)-nuclease (PAN) deadenylation complex. Interacts (via PAM-2 motif) with poly(A)-binding protein PABPC1 (via PABC domain), conferring substrate specificity of the enzyme complex. Interacts with the GW182 family proteins TNRC6A, TNRC6B and TNRC6C. Interacts with YTHDF3. In terms of assembly, interacts with PAN2. Interacts (via N-terminus) with PABPC1 at lower efficiency than isoform 3. As to quaternary structure, interacts with PAN2. Interacts (via N-terminus) with PABPC1 at higher efficiency than isoform 1.

It is found in the cytoplasm. Its subcellular location is the P-body. The protein resides in the nucleus. Its function is as follows. Regulatory subunit of the poly(A)-nuclease (PAN) deadenylation complex, one of two cytoplasmic mRNA deadenylases involved in general and miRNA-mediated mRNA turnover. PAN specifically shortens poly(A) tails of RNA and the activity is stimulated by poly(A)-binding protein (PABP). PAN deadenylation is followed by rapid degradation of the shortened mRNA tails by the CCR4-NOT complex. Deadenylated mRNAs are then degraded by two alternative mechanisms, namely exosome-mediated 3'-5' exonucleolytic degradation, or deadenylation-dependent mRNA decapping and subsequent 5'-3' exonucleolytic degradation by XRN1. PAN3 acts as a regulator for PAN activity, recruiting the catalytic subunit PAN2 to mRNA via its interaction with RNA and PABP, and to miRNA targets via its interaction with GW182 family proteins. In terms of biological role, decreases PAN2-mediated deadenylation, possibly by preventing progression into the second CCR4-NOT mediated stage of biphasic deadenylation. Has a significant effect on mRNA stability, generally stabilizing a subset of the transcriptome. Stabilizes mRNAs degraded by the AU-rich element (ARE)-mediated mRNA decay pathway but promotes degradation of mRNAs by the microRNA-mediated pathway. Its activity influences mRNP remodeling, specifically reducing formation of a subset of P-bodies containing GW220, an isoform of TNRC6A. Functionally, enhances PAN2 deadenylase activity and has an extensive effect on mRNA stability, generally enhancing mRNA decay across the transcriptome by multiple pathways, including the AU-rich element (ARE)-mediated pathway, microRNA-mediated pathway and the nonsense-mediated pathway (NMD). Its activity is required for efficient P-body formation. May be involved in regulating mRNAs of genes involved in cell cycle progression and cell proliferation. This is PAN2-PAN3 deadenylation complex subunit Pan3 from Mus musculus (Mouse).